We begin with the raw amino-acid sequence, 224 residues long: Protein GrpE (224 aa).

Residues 27–77 (NQASEDIDQENQSEVVDDTTENEDASEEVYEEDTASEDGSKEKKSFFKKKE) are disordered. Over residues 31 to 62 (EDIDQENQSEVVDDTTENEDASEEVYEEDTAS) the composition is skewed to acidic residues.

The protein belongs to the GrpE family. As to quaternary structure, homodimer.

The protein localises to the cytoplasm. Functionally, participates actively in the response to hyperosmotic and heat shock by preventing the aggregation of stress-denatured proteins, in association with DnaK and GrpE. It is the nucleotide exchange factor for DnaK and may function as a thermosensor. Unfolded proteins bind initially to DnaJ; upon interaction with the DnaJ-bound protein, DnaK hydrolyzes its bound ATP, resulting in the formation of a stable complex. GrpE releases ADP from DnaK; ATP binding to DnaK triggers the release of the substrate protein, thus completing the reaction cycle. Several rounds of ATP-dependent interactions between DnaJ, DnaK and GrpE are required for fully efficient folding. The sequence is that of Protein GrpE from Lachnoclostridium phytofermentans (strain ATCC 700394 / DSM 18823 / ISDg) (Clostridium phytofermentans).